The chain runs to 669 residues: Polyamine deacetylase HDAC10 (669 aa).

Positions 1 to 323 (MGTALVYHED…VCMTVQTLLG (323 aa)) are histone deacetylase. Asp20 contributes to the substrate binding site. Residues 21–24 (PECE) carry the Substrate specificity motif. His135 acts as the Proton donor/acceptor in catalysis. Zn(2+) contacts are provided by Asp172, His174, and Asp265. Tyr305 contacts substrate. The segment covering 361–373 (DVTAVPMSPSSHS) has biased composition (polar residues). The segment at 361–387 (DVTAVPMSPSSHSPEGRPPPLLPGGPV) is disordered. Ser393 is modified (phosphoserine).

It belongs to the histone deacetylase family. HD type 2 subfamily. In terms of assembly, interacts with HDAC3. Interacts with HDAC2 and NCOR2/SMRT. Interacts with HSPA8/HSC70. Interacts with MSH2. In terms of tissue distribution, widely expressed with high levels in liver and kidney.

It localises to the cytoplasm. It is found in the nucleus. It carries out the reaction N(8)-acetylspermidine + H2O = spermidine + acetate. It catalyses the reaction N-acetylputrescine + H2O = putrescine + acetate. The catalysed reaction is N-acetylcadaverine + H2O = cadaverine + acetate. The enzyme catalyses N(6)-acetyl-L-lysyl-[protein] + H2O = L-lysyl-[protein] + acetate. In terms of biological role, polyamine deacetylase (PDAC), which acts preferentially on N(8)-acetylspermidine, and also on acetylcadaverine and acetylputrescine. Exhibits attenuated catalytic activity toward N(1),N(8)-diacetylspermidine and very low activity, if any, toward N(1)-acetylspermidine. Histone deacetylase activity has been observed in vitro. Has also been shown to be involved in MSH2 deacetylation. The physiological relevance of protein/histone deacetylase activity is unclear and could be very weak. May play a role in the promotion of late stages of autophagy, possibly autophagosome-lysosome fusion and/or lysosomal exocytosis in neuroblastoma cells. May play a role in homologous recombination. May promote DNA mismatch repair. This chain is Polyamine deacetylase HDAC10 (HDAC10), found in Homo sapiens (Human).